Consider the following 906-residue polypeptide: Cadherin-2A (906 aa).

Positions 1–28 are cleaved as a signal peptide; that stretch reads MCRKEPFLLPTALCILAALVLHQGPVEA. Residues 29–160 constitute a propeptide that is removed on maturation; sequence LGGSRLCKTG…KHNGLQRQKR (132 aa). Cadherin domains are found at residues 161-268, 269-383, 384-498, 499-604, and 605-714; these read DWVI…RPEF, LHQI…PPEF, TAMT…NPYF, TPNP…DNAP, and YVYP…TTAP. Topologically, residues 161–724 are extracellular; sequence DWVIPPINVP…IIGTGLGTGA (564 aa). Ca(2+) is bound by residues Glu171, Asp227, Glu229, Asp260, Met261, Asn262, Asp263, and Asn264. Asn274 carries N-linked (GlcNAc...) asparagine glycosylation. Ca(2+) contacts are provided by Asp294, Asp296, and Asn302. Residue Asn326 is glycosylated (N-linked (GlcNAc...) asparagine). Asp354 contacts Ca(2+). Residues Asn403, Asn573, Asn623, Asn652, and Asn693 are each glycosylated (N-linked (GlcNAc...) asparagine). Residues 725–746 form a helical membrane-spanning segment; that stretch reads IIAILLCIIILLTLVLMFVVWM. The Cytoplasmic segment spans residues 747 to 906; the sequence is KRRDKERQAK…LADMYGGSDD (160 aa). Disordered stretches follow at residues 775–800 and 863–884; these read EEGG…EPDT and SGST…EQDY. The span at 776–785 shows a compositional bias: acidic residues; it reads EGGGEEDQDY. Residues 863 to 880 are compositionally biased toward low complexity; it reads SGSTAGSLSSLNSSSSGG.

In terms of assembly, homodimer (via extracellular region). Can also form heterodimers with other cadherins (via extracellular region). Dimerization occurs in trans, i.e. with a cadherin chain from another cell.

Its subcellular location is the cell membrane. It localises to the sarcolemma. The protein resides in the cell junction. The protein localises to the cell surface. It is found in the desmosome. Its subcellular location is the adherens junction. In terms of biological role, calcium-dependent cell adhesion protein; preferentially mediates homotypic cell-cell adhesion. Cadherins may thus contribute to the sorting of heterogeneous cell types, and thereby play an important role during embryonic development. Required for proper neurite branching. Required for pre- and postsynaptic organization. The polypeptide is Cadherin-2A (cdh2-a) (Xenopus laevis (African clawed frog)).